The chain runs to 538 residues: Chaperonin GroEL 1 (538 aa).

ATP contacts are provided by residues 29–32, 86–90, Gly-413, 478–480, and Asp-494; these read TLGP, DGTTT, and NAA.

The protein belongs to the chaperonin (HSP60) family. Forms a cylinder of 14 subunits composed of two heptameric rings stacked back-to-back. Interacts with the co-chaperonin GroES.

It localises to the cytoplasm. It catalyses the reaction ATP + H2O + a folded polypeptide = ADP + phosphate + an unfolded polypeptide.. Its function is as follows. Together with its co-chaperonin GroES, plays an essential role in assisting protein folding. The GroEL-GroES system forms a nano-cage that allows encapsulation of the non-native substrate proteins and provides a physical environment optimized to promote and accelerate protein folding. The polypeptide is Chaperonin GroEL 1 (Corynebacterium glutamicum (strain ATCC 13032 / DSM 20300 / JCM 1318 / BCRC 11384 / CCUG 27702 / LMG 3730 / NBRC 12168 / NCIMB 10025 / NRRL B-2784 / 534)).